A 409-amino-acid polypeptide reads, in one-letter code: Putative fatty acyl-CoA reductase 7 (409 aa).

The protein belongs to the fatty acyl-CoA reductase family.

The protein is Putative fatty acyl-CoA reductase 7 (FAR7) of Arabidopsis thaliana (Mouse-ear cress).